A 1538-amino-acid polypeptide reads, in one-letter code: Lysophospholipase nte1 (1538 aa).

Over 1-74 (MATDGGPLAA…PPPTPSTMAG (74 aa)) the chain is Cytoplasmic. Residues 75 to 95 (WFGWVFSFFFQVIPSVLYWVI) form a helical membrane-spanning segment. The Lumenal segment spans residues 96 to 117 (TFATITLPTWLFTLFSMSLTFT). Residues 118–138 (MNFTTLLLIALAIVSTISWFI) traverse the membrane as a helical segment. Residues 139–1538 (RYRFLNMYSR…RTLAPRRASI (1400 aa)) lie on the Cytoplasmic side of the membrane. Disordered regions lie at residues 242-264 (KPNV…DHRV), 302-393 (EGSS…KSVH), and 529-559 (AAQS…GDLL). Residues 302-314 (EGSSSSASSVGPS) show a composition bias toward low complexity. Over residues 329-345 (GLEDSPRSNFVRDHGDS) the composition is skewed to basic and acidic residues. Residues 692 to 811 (GGTS…QGYV) and 856 to 976 (RLTS…IAQR) each bind a nucleoside 3',5'-cyclic phosphate. In terms of domain architecture, PNPLA spans 1235–1399 (LVLGGGGARG…IDNLTVTHMK (165 aa)). Positions 1239–1244 (GGGARG) match the GXGXXG motif. The GXSXG signature appears at 1266–1270 (GTSIG). The active-site Nucleophile is Ser-1268. Asp-1386 acts as the Proton acceptor in catalysis. A DGA/G motif is present at residues 1386–1388 (DGG). The segment at 1517-1538 (LPEETEEKKKLQRTLAPRRASI) is disordered.

Belongs to the NTE family.

The protein resides in the endoplasmic reticulum membrane. It carries out the reaction a 1-acyl-sn-glycero-3-phosphocholine + H2O = sn-glycerol 3-phosphocholine + a fatty acid + H(+). Inhibited by organophosphorus esters. Its function is as follows. Intracellular phospholipase B that catalyzes the double deacylation of phosphatidylcholine (PC) to glycerophosphocholine (GroPCho). Plays an important role in membrane lipid homeostasis. Responsible for the rapid PC turnover in response to inositol, elevated temperatures, or when choline is present in the growth medium. The chain is Lysophospholipase nte1 (nte1) from Aspergillus oryzae (strain ATCC 42149 / RIB 40) (Yellow koji mold).